Consider the following 571-residue polypeptide: Septation ring formation regulator EzrA (571 aa).

Residues 1–3 (MYY) lie on the Extracellular side of the membrane. Residues 4–22 (MLIGFIIVVIAVIGAGYIL) traverse the membrane as a helical segment. Topologically, residues 23 to 571 (KRKHYQRINE…ESKVSVDDIE (549 aa)) are cytoplasmic. Coiled coils occupy residues 248–298 (LAQM…DTLE), 326–374 (DALA…ASGE), 400–437 (KFAEELRSLRKDELEARDDAERMRRAIITLDRKMERER), and 478–529 (RIAE…ENHF).

Belongs to the EzrA family.

The protein localises to the cell membrane. Its function is as follows. Negative regulator of FtsZ ring formation; modulates the frequency and position of FtsZ ring formation. Inhibits FtsZ ring formation at polar sites. Interacts either with FtsZ or with one of its binding partners to promote depolymerization. The polypeptide is Septation ring formation regulator EzrA (Listeria monocytogenes serovar 1/2a (strain ATCC BAA-679 / EGD-e)).